Consider the following 120-residue polypeptide: Large ribosomal subunit protein uL22 (120 aa).

It belongs to the universal ribosomal protein uL22 family. Part of the 50S ribosomal subunit.

In terms of biological role, this protein binds specifically to 23S rRNA; its binding is stimulated by other ribosomal proteins, e.g. L4, L17, and L20. It is important during the early stages of 50S assembly. It makes multiple contacts with different domains of the 23S rRNA in the assembled 50S subunit and ribosome. Functionally, the globular domain of the protein is located near the polypeptide exit tunnel on the outside of the subunit, while an extended beta-hairpin is found that lines the wall of the exit tunnel in the center of the 70S ribosome. This Corynebacterium urealyticum (strain ATCC 43042 / DSM 7109) protein is Large ribosomal subunit protein uL22.